Reading from the N-terminus, the 140-residue chain is Nucleoside diphosphate kinase (140 aa).

Positions 11, 59, 87, 93, 104, and 114 each coordinate ATP. H117 functions as the Pros-phosphohistidine intermediate in the catalytic mechanism.

Belongs to the NDK family. As to quaternary structure, homotetramer. Mg(2+) serves as cofactor.

The protein resides in the cytoplasm. The catalysed reaction is a 2'-deoxyribonucleoside 5'-diphosphate + ATP = a 2'-deoxyribonucleoside 5'-triphosphate + ADP. It carries out the reaction a ribonucleoside 5'-diphosphate + ATP = a ribonucleoside 5'-triphosphate + ADP. In terms of biological role, major role in the synthesis of nucleoside triphosphates other than ATP. The ATP gamma phosphate is transferred to the NDP beta phosphate via a ping-pong mechanism, using a phosphorylated active-site intermediate. The polypeptide is Nucleoside diphosphate kinase (Maricaulis maris (strain MCS10) (Caulobacter maris)).